A 541-amino-acid polypeptide reads, in one-letter code: Chaperonin GroEL 2 (541 aa).

Residues 29–32 (TLGP), 86–90 (DGTTT), Gly413, 476–478 (NAA), and Asp492 contribute to the ATP site.

The protein belongs to the chaperonin (HSP60) family. Forms a cylinder of 14 subunits composed of two heptameric rings stacked back-to-back. Interacts with the co-chaperonin GroES.

It is found in the secreted. Its subcellular location is the capsule. The protein localises to the cell surface. It localises to the cell wall. The catalysed reaction is ATP + H2O + a folded polypeptide = ADP + phosphate + an unfolded polypeptide.. In terms of biological role, together with its co-chaperonin GroES, plays an essential role in assisting protein folding. The GroEL-GroES system forms a nano-cage that allows encapsulation of the non-native substrate proteins and provides a physical environment optimized to promote and accelerate protein folding. The chain is Chaperonin GroEL 2 from Mycolicibacterium paratuberculosis (strain ATCC BAA-968 / K-10) (Mycobacterium paratuberculosis).